The following is a 629-amino-acid chain: tRNA uridine 5-carboxymethylaminomethyl modification enzyme MnmG (629 aa).

Residues 13–18 (GGGHAG), valine 125, and serine 180 contribute to the FAD site. 273 to 287 (GPRYCPSIEDKVMRF) contacts NAD(+). Glutamine 370 contacts FAD.

Belongs to the MnmG family. In terms of assembly, homodimer. Heterotetramer of two MnmE and two MnmG subunits. Requires FAD as cofactor.

It localises to the cytoplasm. In terms of biological role, NAD-binding protein involved in the addition of a carboxymethylaminomethyl (cmnm) group at the wobble position (U34) of certain tRNAs, forming tRNA-cmnm(5)s(2)U34. This chain is tRNA uridine 5-carboxymethylaminomethyl modification enzyme MnmG, found in Salmonella agona (strain SL483).